The sequence spans 233 residues: Antiholin-like protein LrgB (233 aa).

Transmembrane regions (helical) follow at residues 5-25 (LGIN…VIAT), 33-53 (GFFL…FLKL), 63-83 (IGGD…AIPL), 97-117 (IFGG…LVAI), 152-172 (LTSL…AKIV), and 212-232 (IAVV…APIL).

This sequence belongs to the CidB/LrgB family. LrgB subfamily.

Its subcellular location is the cell membrane. Functionally, inhibits the expression or activity of extracellular murein hydrolases by interacting, possibly with LrgA, with the holin-like proteins CidA and/or CidB. The LrgAB and CidAB proteins may affect the proton motive force of the membrane. May be involved in programmed cell death (PCD), possibly triggering PCD in response to antibiotics and environmental stresses. This chain is Antiholin-like protein LrgB, found in Staphylococcus epidermidis (strain ATCC 35984 / DSM 28319 / BCRC 17069 / CCUG 31568 / BM 3577 / RP62A).